Here is a 564-residue protein sequence, read N- to C-terminus: uncharacterized protein (564 aa).

An N-terminal signal peptide occupies residues 1 to 21 (MRRIGAITALSLPVLLSLLYS). Residue C22 is the site of N-palmitoyl cysteine attachment. The S-diacylglycerol cysteine moiety is linked to residue C22.

Its subcellular location is the cell membrane. This is an uncharacterized protein from Aquifex aeolicus (strain VF5).